Consider the following 377-residue polypeptide: tRNA-specific 2-thiouridylase MnmA (377 aa).

Residues 17–24 (GMSGGVDS) and M43 contribute to the ATP site. The interaction with target base in tRNA stretch occupies residues 103 to 105 (NPD). Residue C108 is the Nucleophile of the active site. Residues C108 and C204 are joined by a disulfide bond. Residue G132 participates in ATP binding. Residues 154–156 (KDQ) form an interaction with tRNA region. Catalysis depends on C204, which acts as the Cysteine persulfide intermediate. The interval 316–317 (RY) is interaction with tRNA.

Belongs to the MnmA/TRMU family.

It localises to the cytoplasm. The catalysed reaction is S-sulfanyl-L-cysteinyl-[protein] + uridine(34) in tRNA + AH2 + ATP = 2-thiouridine(34) in tRNA + L-cysteinyl-[protein] + A + AMP + diphosphate + H(+). Catalyzes the 2-thiolation of uridine at the wobble position (U34) of tRNA, leading to the formation of s(2)U34. The chain is tRNA-specific 2-thiouridylase MnmA from Pseudomonas fluorescens (strain ATCC BAA-477 / NRRL B-23932 / Pf-5).